A 412-amino-acid polypeptide reads, in one-letter code: Divalent metal cation transporter MntH (412 aa).

Topologically, residues 1 to 19 are cytoplasmic; sequence MTNYRVESSSGRAARKMRL. The helical transmembrane segment at 20–39 threads the bilayer; sequence ALMGPAFIAAIGYIDPGNFA. Residues 40 to 51 lie on the Periplasmic side of the membrane; that stretch reads TNIQAGASFGYQ. Residues 52-71 form a helical membrane-spanning segment; that stretch reads LLWVVVWANLMAMLIQILSA. Residues 72–95 are Cytoplasmic-facing; sequence KLGIATGKNLAEQIRDHYPRPVVW. A helical transmembrane segment spans residues 96–118; that stretch reads FYWVQAEIIAMATDLAEFIGAAI. Residues 119–125 lie on the Periplasmic side of the membrane; sequence GFKLILG. Residues 126–145 form a helical membrane-spanning segment; the sequence is VSLLQGAVLTGIATFLILML. The Cytoplasmic segment spans residues 146 to 155; it reads QRRGQKPLEK. The helical transmembrane segment at 156–175 threads the bilayer; the sequence is VIGGLLLFVAAAYIVELIFS. The Periplasmic portion of the chain corresponds to 176-196; it reads QPNLAQLGKGMVIPSLPTSEA. A helical transmembrane segment spans residues 197–220; it reads VFLAAGVLGATIMPHVIYLHSSLT. At 221–238 the chain is on the cytoplasmic side; it reads QHLHGGSRQQRYSATKWD. Residues 239–258 traverse the membrane as a helical segment; sequence VAIAMTIAGFVNLVMMATAA. The Periplasmic segment spans residues 259 to 276; sequence AAFHFSGHTGVADLDEAY. The chain crosses the membrane as a helical span at residues 277–297; the sequence is LTLQPLLSHAAATVFGLSLVA. Topologically, residues 298-327 are cytoplasmic; that stretch reads AGLSSTVVGTLAGQVVMQGFIRFHIPLWVR. Residues 328–344 form a helical membrane-spanning segment; sequence RTVTMLPSFIVILMGLD. Topologically, residues 345-350 are periplasmic; sequence PTRILV. The chain crosses the membrane as a helical span at residues 351-370; the sequence is MSQVLLSFGIALALVPLLIF. Over 371–387 the chain is Cytoplasmic; that stretch reads TSDSKLMGDLVNSKRVK. The helical transmembrane segment at 388–406 threads the bilayer; sequence QTGWVIVVLVVALNIWLLV. At 407-412 the chain is on the periplasmic side; sequence GTALGL.

Belongs to the NRAMP family.

Its subcellular location is the cell inner membrane. Functionally, h(+)-stimulated, divalent metal cation uptake system. In Shigella flexneri serotype 5b (strain 8401), this protein is Divalent metal cation transporter MntH.